The following is an 853-amino-acid chain: DNA mismatch repair protein MutS (853 aa).

Gly-614–Ser-621 contacts ATP.

Belongs to the DNA mismatch repair MutS family.

In terms of biological role, this protein is involved in the repair of mismatches in DNA. It is possible that it carries out the mismatch recognition step. This protein has a weak ATPase activity. The protein is DNA mismatch repair protein MutS of Cronobacter sakazakii (strain ATCC BAA-894) (Enterobacter sakazakii).